The sequence spans 331 residues: Tyrosine--tRNA ligase (331 aa).

5 residues coordinate L-tyrosine: tyrosine 31, tyrosine 155, glutamine 159, aspartate 162, and glutamine 177. Positions lysine 218–serine 222 match the 'KMSKS' region motif. Lysine 221 is a binding site for ATP.

The protein belongs to the class-I aminoacyl-tRNA synthetase family. TyrS type 4 subfamily. As to quaternary structure, homodimer.

It is found in the cytoplasm. It catalyses the reaction tRNA(Tyr) + L-tyrosine + ATP = L-tyrosyl-tRNA(Tyr) + AMP + diphosphate + H(+). Its function is as follows. Catalyzes the attachment of tyrosine to tRNA(Tyr) in a two-step reaction: tyrosine is first activated by ATP to form Tyr-AMP and then transferred to the acceptor end of tRNA(Tyr). This is Tyrosine--tRNA ligase from Thermoplasma volcanium (strain ATCC 51530 / DSM 4299 / JCM 9571 / NBRC 15438 / GSS1).